A 310-amino-acid chain; its full sequence is Porphobilinogen deaminase (310 aa).

The residue at position 242 (cysteine 242) is an S-(dipyrrolylmethanemethyl)cysteine.

The protein belongs to the HMBS family. In terms of assembly, monomer. Dipyrromethane is required as a cofactor.

The enzyme catalyses 4 porphobilinogen + H2O = hydroxymethylbilane + 4 NH4(+). It functions in the pathway porphyrin-containing compound metabolism; protoporphyrin-IX biosynthesis; coproporphyrinogen-III from 5-aminolevulinate: step 2/4. In terms of biological role, tetrapolymerization of the monopyrrole PBG into the hydroxymethylbilane pre-uroporphyrinogen in several discrete steps. This Shewanella oneidensis (strain ATCC 700550 / JCM 31522 / CIP 106686 / LMG 19005 / NCIMB 14063 / MR-1) protein is Porphobilinogen deaminase.